The primary structure comprises 127 residues: MSNTPVELKYTESHEWVRTEADGTLTIGITDLAQEQLGDIVFLELPDTGRQVKQGEAIAVVESVKAASDIYAPVSGEVIASNADATESPESVNEDAYDAWLFKIKPANADDVNALLSADQYQAKAGA.

Positions 24–105 (TLTIGITDLA…AYDAWLFKIK (82 aa)) constitute a Lipoyl-binding domain. At K65 the chain carries N6-lipoyllysine.

Belongs to the GcvH family. As to quaternary structure, the glycine cleavage system is composed of four proteins: P, T, L and H. Requires (R)-lipoate as cofactor.

Functionally, the glycine cleavage system catalyzes the degradation of glycine. The H protein shuttles the methylamine group of glycine from the P protein to the T protein. This chain is Glycine cleavage system H protein, found in Ralstonia nicotianae (strain ATCC BAA-1114 / GMI1000) (Ralstonia solanacearum).